The primary structure comprises 151 residues: Calmodulin (151 aa).

4 consecutive EF-hand domains span residues 10–45 (EQIS…LGQN), 46–81 (PTEA…KMKD), 83–118 (DSEE…LGEK), and 119–151 (LTDE…MLSK). Ca(2+) contacts are provided by D23, D25, D27, S29, E34, D59, D61, N63, T65, E70, D96, D98, N100, E107, D132, D134, D136, and E143.

It belongs to the calmodulin family.

In terms of biological role, calmodulin mediates the control of a large number of enzymes, ion channels and other proteins by Ca(2+). Among the enzymes to be stimulated by the calmodulin-Ca(2+) complex are a number of protein kinases and phosphatases. This chain is Calmodulin, found in Pneumocystis carinii.